A 516-amino-acid polypeptide reads, in one-letter code: MAGSTSASLQTPYFPSSTQINPVRVDHTLPLPPAQPSLSFTQGLLVGQLSVVLLIGAFIKFFIFGEAPPPPSRGLSNRTSTHPRSYSINAASTDSSPRLLREKPSTSNILRPVPSSSTNTRSILRKTYYSATPTHPTPKHGRPRLYHSSHQPESLDWFNVLIAQTIAQYRQTAYILKDSPTSSILASLSETLNNPEKKPSFIDIIKVTDISLGEEFPIFSNCRVIAVEDPNSDGGRLQALMDVDLSDDNLSLAIETSLLLNYPKPFSAVLPVALAVSVVRFSGTLCISFVPGPRTSDQTMSPIPTPHDTTSEAIDDQSSDQSSPAQNPDGPKDAHANTSNTTDASSKHGIPKTSLAFSFLPDYRLDLSVRSLIGSRSRLQDVPKVAQLVEARVQSWFEERVVEPRVQVVGLPNIWPRMGRTGLRSSQEEPEAGSGSVEIPVMTSPGTDGVSGGGGGGGSMRGIDRGLSGREVGYEALRFRHAACGGHQNQSGRDGGRGGNEQFAMPGSMPDTVTET.

At 1–43 the chain is on the lumenal side; the sequence is MAGSTSASLQTPYFPSSTQINPVRVDHTLPLPPAQPSLSFTQG. Residues 44–64 form a helical membrane-spanning segment; the sequence is LLVGQLSVVLLIGAFIKFFIF. The Cytoplasmic segment spans residues 65-516; that stretch reads GEAPPPPSRG…GSMPDTVTET (452 aa). Disordered stretches follow at residues 70–118, 295–349, 420–466, and 485–516; these read PPSR…SSST, TSDQ…SKHG, RTGL…IDRG, and GGHQ…VTET. Composition is skewed to polar residues over residues 74 to 96, 105 to 118, and 295 to 312; these read GLSN…TDSS, STSN…SSST, and TSDQ…TTSE. An SMP-LTD domain is found at 151–412; it reads QPESLDWFNV…EPRVQVVGLP (262 aa). Gly residues predominate over residues 449–460; that stretch reads GVSGGGGGGGSM.

It belongs to the MMM1 family. As to quaternary structure, homodimer. Component of the ER-mitochondria encounter structure (ERMES) or MDM complex, composed of MMM1, MDM10, MDM12 and MDM34. An MMM1 homodimer associates with one molecule of MDM12 on each side in a pairwise head-to-tail manner, and the SMP-LTD domains of MMM1 and MDM12 generate a continuous hydrophobic tunnel for phospholipid trafficking.

Its subcellular location is the endoplasmic reticulum membrane. In terms of biological role, component of the ERMES/MDM complex, which serves as a molecular tether to connect the endoplasmic reticulum (ER) and mitochondria. Components of this complex are involved in the control of mitochondrial shape and protein biogenesis, and function in nonvesicular lipid trafficking between the ER and mitochondria. The MDM12-MMM1 subcomplex functions in the major beta-barrel assembly pathway that is responsible for biogenesis of all outer membrane beta-barrel proteins, and acts in a late step after the SAM complex. The MDM10-MDM12-MMM1 subcomplex further acts in the TOM40-specific pathway after the action of the MDM12-MMM1 complex. Essential for establishing and maintaining the structure of mitochondria and maintenance of mtDNA nucleoids. The sequence is that of Maintenance of mitochondrial morphology protein 1 from Paracoccidioides brasiliensis (strain Pb18).